We begin with the raw amino-acid sequence, 428 residues long: MQKFLELKPVSYINGTIYLPGSKSISNRVLLLSAMANGITCLTNLLDSQDTQYMLNALRKIGIKFFLSNNNTTCHVHGIGKAFHLSHPISLFLGNAGTAMRPLLAALSLYENNVVLSGDDRMHERPIAHLVDALKQGGATLEYKKGIGYPPVLTKGGFKGGSIMLDGSISSQFLTSLLMVAPLALQNTNIFIKGNLVSKPYIDITLNLMKSFGVNIVNDCYKSFYIKGNQKYESPGNYLVEGDASSASYFLAAAAIKGGSVKVVGVGKKSVQGDIKFADVLEKMGAIIDWGDSFIVCRHNKLEKIDLDMNHIPDAAMTIAIVALFAKGTSIIKNIYNWRVKETDRLSAMSKELKKVGAIIKEGRDCLSITPPNFFKFAEIDTYNDHRMAMCFSLICLSGISVRILNPNCISKTFPSYFENFLKISRFD.

The 3-phosphoshikimate site is built by K23, S24, and R28. K23 contributes to the phosphoenolpyruvate binding site. Phosphoenolpyruvate contacts are provided by G97 and R125. 7 residues coordinate 3-phosphoshikimate: S170, S171, Q172, S198, D314, N337, and K341. Position 172 (Q172) interacts with phosphoenolpyruvate. The Proton acceptor role is filled by D314. Residues R345, R387, and K412 each contribute to the phosphoenolpyruvate site.

It belongs to the EPSP synthase family. Monomer.

The protein resides in the cytoplasm. The enzyme catalyses 3-phosphoshikimate + phosphoenolpyruvate = 5-O-(1-carboxyvinyl)-3-phosphoshikimate + phosphate. It functions in the pathway metabolic intermediate biosynthesis; chorismate biosynthesis; chorismate from D-erythrose 4-phosphate and phosphoenolpyruvate: step 6/7. In terms of biological role, catalyzes the transfer of the enolpyruvyl moiety of phosphoenolpyruvate (PEP) to the 5-hydroxyl of shikimate-3-phosphate (S3P) to produce enolpyruvyl shikimate-3-phosphate and inorganic phosphate. The chain is 3-phosphoshikimate 1-carboxyvinyltransferase from Buchnera aphidicola subsp. Schizaphis graminum (strain Sg).